Here is a 192-residue protein sequence, read N- to C-terminus: Peptidyl-tRNA hydrolase (192 aa).

Y17 is a binding site for tRNA. H22 functions as the Proton acceptor in the catalytic mechanism. The tRNA site is built by F68, N70, and N116.

It belongs to the PTH family. In terms of assembly, monomer.

It localises to the cytoplasm. The catalysed reaction is an N-acyl-L-alpha-aminoacyl-tRNA + H2O = an N-acyl-L-amino acid + a tRNA + H(+). Its function is as follows. Hydrolyzes ribosome-free peptidyl-tRNAs (with 1 or more amino acids incorporated), which drop off the ribosome during protein synthesis, or as a result of ribosome stalling. Functionally, catalyzes the release of premature peptidyl moieties from peptidyl-tRNA molecules trapped in stalled 50S ribosomal subunits, and thus maintains levels of free tRNAs and 50S ribosomes. This Buchnera aphidicola subsp. Cinara cedri (strain Cc) protein is Peptidyl-tRNA hydrolase.